A 381-amino-acid polypeptide reads, in one-letter code: Glucose-1-phosphate adenylyltransferase (381 aa).

Alpha-D-glucose 1-phosphate-binding positions include tyrosine 100, glycine 165, 180–181 (EK), and serine 191.

Belongs to the bacterial/plant glucose-1-phosphate adenylyltransferase family. Homotetramer.

It carries out the reaction alpha-D-glucose 1-phosphate + ATP + H(+) = ADP-alpha-D-glucose + diphosphate. It participates in glycan biosynthesis; glycogen biosynthesis. In terms of biological role, involved in the biosynthesis of ADP-glucose, a building block required for the elongation reactions to produce glycogen. Catalyzes the reaction between ATP and alpha-D-glucose 1-phosphate (G1P) to produce pyrophosphate and ADP-Glc. The protein is Glucose-1-phosphate adenylyltransferase of Mycoplasma mobile (strain ATCC 43663 / 163K / NCTC 11711) (Mesomycoplasma mobile).